The sequence spans 307 residues: 17-beta-hydroxysteroid dehydrogenase type 3 (307 aa).

Residues I6 to L26 form a helical membrane-spanning segment. G47–I76 serves as a coordination point for NADP(+). Residue S187 coordinates substrate. Residue Y200 is the Proton acceptor of the active site.

This sequence belongs to the short-chain dehydrogenases/reductases (SDR) family. As to expression, expression shows strong sexual dimorphism. In female, highly expressed in ovaries, and at lower levels in skin muscle, eyes and liver. In males, strongly expressed in liver and at lower levels in testis, spleen, kidney, intestine and muscle.

Its subcellular location is the endoplasmic reticulum. The protein resides in the membrane. The catalysed reaction is a 17beta-hydroxy steroid + NADP(+) = a 17-oxo steroid + NADPH + H(+). The enzyme catalyses testosterone + NADP(+) = androst-4-ene-3,17-dione + NADPH + H(+). It carries out the reaction 3beta-hydroxyandrost-5-en-17-one + NADPH + H(+) = androst-5-en-3beta,17beta-diol + NADP(+). It catalyses the reaction 3beta-hydroxy-5alpha-androstan-17-one + NADPH + H(+) = 5alpha-androstane-3beta,17beta-diol + NADP(+). The catalysed reaction is androst-4-ene-3,11,17-trione + NADPH + H(+) = 17beta-hydroxyandrost-4-ene-3,11-dione + NADP(+). The enzyme catalyses 11beta-hydroxyandrost-4-ene-3,17-dione + NADPH + H(+) = 11beta,17beta-dihydroxyandrost-4-ene-3-one + NADP(+). The protein operates within hormone biosynthesis; testosterone biosynthesis. It functions in the pathway steroid metabolism. Its function is as follows. Catalyzes the conversion of 17-oxosteroids to 17beta-hydroxysteroids in the presence of NADPH. Favors the reduction of androstenedione to testosterone. Testosterone is the key androgen driving male development and function. Among further tested androgens epiandrosterone and dehydroepiandrosterone are accepted as substrates and reduced at C-17. Can also reduce 11-ketoandrostenedione as well as 11beta-hydroxyandrostenedione at C-17 to the respective testosterone forms. Cannot use androsterone and androstanedione as substrates. In Danio rerio (Zebrafish), this protein is 17-beta-hydroxysteroid dehydrogenase type 3 (hsd17b3).